The sequence spans 647 residues: Versicolorin B synthase (647 aa).

A signal peptide spans M1–A26. Residues T85–A86 and E106–A107 each bind FAD. N-linked (GlcNAc...) asparagine glycosylation is present at N117. G172–L175 serves as a coordination point for FAD. N-linked (GlcNAc...) asparagine glycosylation is found at N222 and N509. FAD contacts are provided by residues A617 and P628–M629.

This sequence belongs to the GMC oxidoreductase family. As to quaternary structure, homodimer. FAD serves as cofactor.

It localises to the cytoplasm. The protein localises to the cytosol. The enzyme catalyses (2S-3S)-versiconal hemiacetal = versicolorin B + H2O. It carries out the reaction (S)-5'-oxoaverantin + H(+) = (1'S,5'S)-averufin + H2O. It participates in mycotoxin biosynthesis. In terms of biological role, versicolorin B synthase; part of the fragmented gene cluster that mediates the biosynthesis of dothistromin (DOTH), a polyketide toxin very similar in structure to the aflatoxin precursor, versicolorin B. The first step of the pathway is the conversion of acetate to norsolorinic acid (NOR) and requires the fatty acid synthase subunits hexA and hexB, as well as the polyketide synthase pksA. PksA combines a hexanoyl starter unit and 7 malonyl-CoA extender units to synthesize the precursor NOR. The hexanoyl starter unit is provided to the acyl-carrier protein (ACP) domain by the fungal fatty acid synthase hexA/hexB. The second step is the conversion of NOR to averantin (AVN) and requires the norsolorinic acid ketoreductase nor1, which catalyzes the dehydration of norsolorinic acid to form (1'S)-averantin. The cytochrome P450 monooxygenase avnA then catalyzes the hydroxylation of AVN to 5'hydroxyaverantin (HAVN). The next step is performed by adhA that transforms HAVN to averufin (AVF). Averufin might then be converted to hydroxyversicolorone by cypX and avfA. Hydroxyversicolorone is further converted versiconal hemiacetal acetate (VHA) by moxY. VHA is then the substrate for the versiconal hemiacetal acetate esterase est1 to yield versiconal (VAL). Versicolorin B synthase vbsA then converts VAL to versicolorin B (VERB) by closing the bisfuran ring. Then, the activity of the versicolorin B desaturase verB leads to versicolorin A (VERA). DotB, a predicted chloroperoxidase, may perform epoxidation of the A-ring of VERA. Alternatively, a cytochrome P450, such as cypX or avnA could catalyze this step. It is also possible that another, uncharacterized, cytochrome P450 enzyme is responsible for this step. Opening of the epoxide could potentially be achieved by the epoxide hydrolase epoA. However, epoA seems not to be required for DOTH biosynthesis, but other epoxide hydrolases may have the ability to complement this hydrolysis. Alternatively, opening of the epoxide ring could be achieved non-enzymatically. The next step is the deoxygenation of ring A to yield the 5,8-dihydroxyanthraquinone which is most likely catalyzed by the NADPH dehydrogenase encoded by ver1. The last stages of DOTH biosynthesis are proposed to involve hydroxylation of the bisfuran. OrdB and norB might have oxidative roles here. An alternative possibility is that cytochrome P450 monoogenases such as avnA and cypX might perform these steps in addition to previously proposed steps. This chain is Versicolorin B synthase, found in Dothistroma septosporum (Red band needle blight fungus).